The following is a 373-amino-acid chain: SWI/SNF-related matrix-associated actin-dependent regulator of chromatin subfamily B member 1-A (373 aa).

Positions 1–101 (MALSKTYGQK…DEKYKAVSIS (101 aa)) are DNA-binding.

This sequence belongs to the SNF5 family. As to quaternary structure, component of the multiprotein chromatin-remodeling complexes SWI/SNF. Component of neural progenitors-specific chromatin remodeling complex (npBAF complex) and the neuron-specific chromatin remodeling complex (nBAF complex). Component of the BAF (SWI/SNF) chromatin remodeling complex. Component of the SWI/SNF-B (PBAF) chromatin remodeling complex. Binds to double-stranded DNA.

It is found in the nucleus. Involved in chromatin-remodeling. Core component of the BAF (SWI/SNF) complex. This ATP-dependent chromatin-remodeling complex plays important roles in cell proliferation and differentiation, in cellular antiviral activities and inhibition of tumor formation. Belongs to the neural progenitors-specific chromatin remodeling complex (npBAF complex) and the neuron-specific chromatin remodeling complex (nBAF complex) and may play a role in neural development. This chain is SWI/SNF-related matrix-associated actin-dependent regulator of chromatin subfamily B member 1-A (smarcb1a), found in Danio rerio (Zebrafish).